The primary structure comprises 308 residues: UDP-3-O-acyl-N-acetylglucosamine deacetylase (308 aa).

Positions 77, 233, and 237 each coordinate Zn(2+). Histidine 260 acts as the Proton donor in catalysis.

This sequence belongs to the LpxC family. The cofactor is Zn(2+).

The enzyme catalyses a UDP-3-O-[(3R)-3-hydroxyacyl]-N-acetyl-alpha-D-glucosamine + H2O = a UDP-3-O-[(3R)-3-hydroxyacyl]-alpha-D-glucosamine + acetate. It participates in glycolipid biosynthesis; lipid IV(A) biosynthesis; lipid IV(A) from (3R)-3-hydroxytetradecanoyl-[acyl-carrier-protein] and UDP-N-acetyl-alpha-D-glucosamine: step 2/6. Functionally, catalyzes the hydrolysis of UDP-3-O-myristoyl-N-acetylglucosamine to form UDP-3-O-myristoylglucosamine and acetate, the committed step in lipid A biosynthesis. The polypeptide is UDP-3-O-acyl-N-acetylglucosamine deacetylase (Nitratidesulfovibrio vulgaris (strain ATCC 29579 / DSM 644 / CCUG 34227 / NCIMB 8303 / VKM B-1760 / Hildenborough) (Desulfovibrio vulgaris)).